Reading from the N-terminus, the 359-residue chain is Fructose-bisphosphate aldolase 1 (359 aa).

Position 50 (Ser50) interacts with D-glyceraldehyde 3-phosphate. The active-site Proton donor is the Asp83. 4 residues coordinate Zn(2+): His84, Asp105, Glu142, and His198. Gly199 contributes to the dihydroxyacetone phosphate binding site. Zn(2+) is bound at residue His232. Dihydroxyacetone phosphate-binding positions include 233-235 (GSS) and 275-278 (NIDT).

Belongs to the class II fructose-bisphosphate aldolase family. As to quaternary structure, homodimer. Requires Zn(2+) as cofactor.

It carries out the reaction beta-D-fructose 1,6-bisphosphate = D-glyceraldehyde 3-phosphate + dihydroxyacetone phosphate. Its pathway is carbohydrate biosynthesis; Calvin cycle. It participates in carbohydrate degradation; glycolysis; D-glyceraldehyde 3-phosphate and glycerone phosphate from D-glucose: step 4/4. Its function is as follows. Catalyzes the aldol condensation of dihydroxyacetone phosphate (DHAP or glycerone-phosphate) with glyceraldehyde 3-phosphate (G3P) to form fructose 1,6-bisphosphate (FBP) in gluconeogenesis and the reverse reaction in glycolysis. This Cereibacter sphaeroides (Rhodobacter sphaeroides) protein is Fructose-bisphosphate aldolase 1 (cfxA).